The sequence spans 310 residues: tRNA-cytidine(32) 2-sulfurtransferase (310 aa).

The short motif at S45–S50 is the PP-loop motif element. Residues C120, C123, and C211 each coordinate [4Fe-4S] cluster.

The protein belongs to the TtcA family. Homodimer. Mg(2+) serves as cofactor. Requires [4Fe-4S] cluster as cofactor.

It is found in the cytoplasm. It carries out the reaction cytidine(32) in tRNA + S-sulfanyl-L-cysteinyl-[cysteine desulfurase] + AH2 + ATP = 2-thiocytidine(32) in tRNA + L-cysteinyl-[cysteine desulfurase] + A + AMP + diphosphate + H(+). The protein operates within tRNA modification. Functionally, catalyzes the ATP-dependent 2-thiolation of cytidine in position 32 of tRNA, to form 2-thiocytidine (s(2)C32). The sulfur atoms are provided by the cysteine/cysteine desulfurase (IscS) system. The chain is tRNA-cytidine(32) 2-sulfurtransferase from Shewanella baltica (strain OS195).